Here is a 539-residue protein sequence, read N- to C-terminus: Dihydrolipoyllysine-residue acetyltransferase component 3 of pyruvate dehydrogenase complex, mitochondrial (539 aa).

The transit peptide at 1–102 directs the protein to the mitochondrion; sequence MAYASRIINH…SCLMQSARGF (102 aa). The region spanning 111-187 is the Lipoyl-binding domain; the sequence is HQEIGMPSLS…QVGEVIAITV (77 aa). Lysine 152 bears the N6-lipoyllysine mark. A disordered region spans residues 195 to 247; sequence KFKDYTPSSTADAAPTKAEPTPAPPKEEKVKQPSSPPEPKASKPSTPPTGDRV. The span at 204-214 shows a compositional bias: low complexity; that stretch reads TADAAPTKAEP. The Peripheral subunit-binding (PSBD) domain occupies 248-285; the sequence is FASPLARKLAEDNNVPLSDIEGTGPEGRIVKADIDEYL. Residues histidine 512 and aspartate 516 contribute to the active site.

Belongs to the 2-oxoacid dehydrogenase family. (R)-lipoate serves as cofactor.

It localises to the mitochondrion matrix. The enzyme catalyses N(6)-[(R)-dihydrolipoyl]-L-lysyl-[protein] + acetyl-CoA = N(6)-[(R)-S(8)-acetyldihydrolipoyl]-L-lysyl-[protein] + CoA. Functionally, the pyruvate dehydrogenase complex catalyzes the overall conversion of pyruvate to acetyl-CoA and CO(2). It contains multiple copies of three enzymatic components: pyruvate dehydrogenase (E1), dihydrolipoamide acetyltransferase (E2) and lipoamide dehydrogenase (E3). The polypeptide is Dihydrolipoyllysine-residue acetyltransferase component 3 of pyruvate dehydrogenase complex, mitochondrial (Arabidopsis thaliana (Mouse-ear cress)).